The following is a 315-amino-acid chain: Ribosomal protein L11 methyltransferase (315 aa).

Thr-164, Gly-185, Asp-207, and Asn-250 together coordinate S-adenosyl-L-methionine.

Belongs to the methyltransferase superfamily. PrmA family.

It localises to the cytoplasm. The enzyme catalyses L-lysyl-[protein] + 3 S-adenosyl-L-methionine = N(6),N(6),N(6)-trimethyl-L-lysyl-[protein] + 3 S-adenosyl-L-homocysteine + 3 H(+). Its function is as follows. Methylates ribosomal protein L11. This is Ribosomal protein L11 methyltransferase from Exiguobacterium sibiricum (strain DSM 17290 / CCUG 55495 / CIP 109462 / JCM 13490 / 255-15).